A 131-amino-acid polypeptide reads, in one-letter code: D-ribose pyranase (131 aa).

Residue His-20 is the Proton donor of the active site. Residues Asp-28, His-98, and 120–122 (YAN) each bind substrate.

Belongs to the RbsD / FucU family. RbsD subfamily. Homodecamer.

It localises to the cytoplasm. The catalysed reaction is beta-D-ribopyranose = beta-D-ribofuranose. Its pathway is carbohydrate metabolism; D-ribose degradation; D-ribose 5-phosphate from beta-D-ribopyranose: step 1/2. Catalyzes the interconversion of beta-pyran and beta-furan forms of D-ribose. The chain is D-ribose pyranase from Bacillus cereus (strain 03BB102).